A 137-amino-acid polypeptide reads, in one-letter code: Ribonuclease VapC3 (137 aa).

Positions 12–129 (VVVDASAMVD…LTTDERLARA (118 aa)) constitute a PINc domain. The Mg(2+) site is built by D15 and D105.

This sequence belongs to the PINc/VapC protein family. Mg(2+) is required as a cofactor.

Toxic component of a type II toxin-antitoxin (TA) system. An RNase. Its toxic effect is neutralized by coexpression with cognate antitoxin VapB3. The polypeptide is Ribonuclease VapC3 (Mycobacterium tuberculosis (strain CDC 1551 / Oshkosh)).